Here is a 65-residue protein sequence, read N- to C-terminus: ATP synthase F(0) complex subunit 8 (65 aa).

A helical transmembrane segment spans residues 8-24 (TWLTTILSMFLALFIIF). Lys53 bears the N6-acetyllysine; alternate mark. N6-succinyllysine; alternate is present on Lys53. Lys56 carries the post-translational modification N6-acetyllysine.

This sequence belongs to the ATPase protein 8 family. As to quaternary structure, component of the ATP synthase complex composed at least of ATP5F1A/subunit alpha, ATP5F1B/subunit beta, ATP5MC1/subunit c (homooctomer), MT-ATP6/subunit a, MT-ATP8/subunit 8, ATP5ME/subunit e, ATP5MF/subunit f, ATP5MG/subunit g, ATP5MK/subunit k, ATP5MJ/subunit j, ATP5F1C/subunit gamma, ATP5F1D/subunit delta, ATP5F1E/subunit epsilon, ATP5PF/subunit F6, ATP5PB/subunit b, ATP5PD/subunit d, ATP5PO/subunit OSCP. ATP synthase complex consists of a soluble F(1) head domain (subunits alpha(3) and beta(3)) - the catalytic core - and a membrane F(0) domain - the membrane proton channel (subunits c, a, 8, e, f, g, k and j). These two domains are linked by a central stalk (subunits gamma, delta, and epsilon) rotating inside the F1 region and a stationary peripheral stalk (subunits F6, b, d, and OSCP). Interacts with PRICKLE3.

The protein resides in the mitochondrion membrane. Its function is as follows. Subunit 8, of the mitochondrial membrane ATP synthase complex (F(1)F(0) ATP synthase or Complex V) that produces ATP from ADP in the presence of a proton gradient across the membrane which is generated by electron transport complexes of the respiratory chain. ATP synthase complex consist of a soluble F(1) head domain - the catalytic core - and a membrane F(1) domain - the membrane proton channel. These two domains are linked by a central stalk rotating inside the F(1) region and a stationary peripheral stalk. During catalysis, ATP synthesis in the catalytic domain of F(1) is coupled via a rotary mechanism of the central stalk subunits to proton translocation. In vivo, can only synthesize ATP although its ATP hydrolase activity can be activated artificially in vitro. Part of the complex F(0) domain. The sequence is that of ATP synthase F(0) complex subunit 8 from Capra ibex ibex (Alpine ibex).